We begin with the raw amino-acid sequence, 209 residues long: uncharacterized protein (209 aa).

4 consecutive transmembrane segments (helical) span residues 21–41, 81–101, 107–127, and 159–179; these read LAYLNVLWILFSLAGLVVFGL, ILGLIVVTAALFLFADMRIAA, VLVNVFVSISLIFAFVVLYVF, and AAGAVGVLCLVLFHVTFLLFF.

Its subcellular location is the cell membrane. This is an uncharacterized protein from Bacillus subtilis (strain 168).